Reading from the N-terminus, the 434-residue chain is Iron transporter MagA (434 aa).

Helical transmembrane passes span 6-26, 31-51, 56-76, 86-106, 113-133, 176-196, 269-289, 294-314, 321-341, and 357-377; these read PELT…GMMT, PAVV…FGLV, AVAT…GMKL, KTAI…ALLL, SLGL…AVVI, LLPA…LLFW, SVLL…KFIW, TVLT…VTAL, WPSA…SFLL, and KLVV…LFTM.

The protein belongs to the monovalent cation:proton antiporter 2 (CPA2) transporter (TC 2.A.37) family.

It is found in the membrane. Iron transporter, which is required for the synthesis of bacterial magnetic particles (BMPs). Probably involved in the transport of iron from the environment into the cytoplasm across the cell membrane, and then from the cytoplasm into the BMP lipid vesicle across the BMP membrane. This chain is Iron transporter MagA (magA), found in Paramagnetospirillum magneticum (strain ATCC 700264 / AMB-1) (Magnetospirillum magneticum).